We begin with the raw amino-acid sequence, 423 residues long: COP9 signalosome complex subunit 3 (423 aa).

Alanine 2 is subject to N-acetylalanine. The region spanning 197–365 is the PCI domain; sequence NFERALYFYE…GMVSFHDNPE (169 aa). Residues 402–423 are disordered; that stretch reads QFVQKSMGSQEDDSGNKPSSYS. 3 positions are modified to phosphoserine: serine 407, serine 410, and serine 423.

It belongs to the CSN3 family. Component of the CSN complex, composed of COPS1/GPS1, COPS2, COPS3, COPS4, COPS5, COPS6, COPS7 (COPS7A or COPS7B), COPS8 and COPS9 isoform 1. In the complex, it probably interacts directly with COPS1, COPS4, COPS8 and COPS9 isoform 1. Interacts with CK2 and PKD. Interacts with the translation initiation factor EIF3S6 and IKBKG. Interacts with ERCC6. In terms of tissue distribution, widely expressed. Expressed at high level in heart and skeletal muscle.

Its subcellular location is the cytoplasm. It localises to the nucleus. Its function is as follows. Component of the COP9 signalosome complex (CSN), a complex involved in various cellular and developmental processes. The CSN complex is an essential regulator of the ubiquitin (Ubl) conjugation pathway by mediating the deneddylation of the cullin subunits of SCF-type E3 ligase complexes, leading to decrease the Ubl ligase activity of SCF-type complexes such as SCF, CSA or DDB2. The complex is also involved in phosphorylation of p53/TP53, c-jun/JUN, IkappaBalpha/NFKBIA, ITPK1 and IRF8/ICSBP, possibly via its association with CK2 and PKD kinases. CSN-dependent phosphorylation of TP53 and JUN promotes and protects degradation by the Ubl system, respectively. This chain is COP9 signalosome complex subunit 3 (COPS3), found in Homo sapiens (Human).